A 222-amino-acid polypeptide reads, in one-letter code: 2-amino-5-formylamino-6-ribosylaminopyrimidin-4(3H)-one 5'-monophosphate deformylase (222 aa).

Residues Glu-29, His-31, Asp-40, and His-108 each coordinate Fe cation.

This sequence belongs to the creatininase superfamily. FAPy deformylase family. As to quaternary structure, homodimer. Fe(2+) serves as cofactor. It depends on Zn(2+) as a cofactor.

The enzyme catalyses 2-amino-5-formylamino-6-(5-phospho-D-ribosylamino)pyrimidin-4(3H)-one + H2O = 2,5-diamino-6-(1-D-ribosylamino)pyrimidin-4(3H)-one 5'-phosphate + formate + H(+). The protein operates within cofactor biosynthesis; coenzyme F420 biosynthesis. It participates in cofactor biosynthesis; riboflavin biosynthesis. Functionally, catalyzes the hydrolysis of the formamide of 2-amino-5-formylamino-6-ribosylamino-4(3H)-pyrimidinone 5'-monophosphate (FAPy) to form 2,5-diamino-6-ribosylamino-4(3H)-pyrimidinone 5'-phosphate (APy). In Methanocaldococcus infernus (strain DSM 11812 / JCM 15783 / ME), this protein is 2-amino-5-formylamino-6-ribosylaminopyrimidin-4(3H)-one 5'-monophosphate deformylase.